A 146-amino-acid chain; its full sequence is Allograft inflammatory factor 1 (146 aa).

Ser1 is subject to N-acetylserine. Residue Lys10 is modified to N6-acetyllysine. Position 38 is a phosphoserine (Ser38). The 36-residue stretch at Arg44–Pro79 folds into the EF-hand 1 domain. Positions 57, 59, 61, 63, and 99 each coordinate Ca(2+). An EF-hand 2; degenerate domain is found at Thr81–Ala115. The interval Ala127 to Pro146 is disordered.

In terms of assembly, homodimer (Potential). Monomer. Interacts with LCP1. As to expression, microglial cells in the central nervous system and dendritic cells and macrophages in several organs.

It is found in the cytoplasm. It localises to the cytoskeleton. The protein resides in the cell projection. Its subcellular location is the ruffle membrane. The protein localises to the phagocytic cup. In terms of biological role, actin-binding protein that enhances membrane ruffling and RAC activation. Enhances the actin-bundling activity of LCP1. Binds calcium. Plays a role in RAC signaling and in phagocytosis. May play a role in macrophage activation and function. Promotes the proliferation of vascular smooth muscle cells and of T-lymphocytes. Enhances lymphocyte migration. Plays a role in vascular inflammation. Has a dual influence on glucose-induced insulin secretion: inhibition at low concentration and stimulation at high concentrations. This chain is Allograft inflammatory factor 1 (AIF1), found in Sus scrofa (Pig).